The primary structure comprises 499 residues: Glucooligosaccharide oxidase (499 aa).

The N-terminal stretch at 1 to 25 (MVRIQELTAALSLASVVQASWIQKR) is a signal peptide. Cysteine 31 and cysteine 80 are disulfide-bonded. The FAD-binding PCMH-type domain maps to 58–230 (VDYDPAAIAI…SEFEFNTFEA (173 aa)). The segment at residues 95–155 (HSYGSYGFGG…GNRALSHGTC (61 aa)) is a cross-link (6-(S-cysteinyl)-8alpha-(pros-histidyl)-FAD (His-Cys)). 3 residues coordinate substrate: tyrosine 97, threonine 154, and arginine 270. Asparagine 330 and asparagine 366 each carry an N-linked (GlcNAc...) asparagine glycan. Residues glutamine 378 and glutamine 409 each coordinate substrate. The N-linked (GlcNAc...) asparagine glycan is linked to asparagine 419. Residue tyrosine 454 participates in substrate binding. Tyrosine 454 acts as the Proton acceptor in catalysis.

Belongs to the oxygen-dependent FAD-linked oxidoreductase family. The cofactor is FAD. The FAD cofactor is bound via a bicovalent 6-S-cysteinyl, 8alpha-N1-histidyl FAD linkage.

It localises to the secreted. It carries out the reaction beta-lactose + O2 = lactobiono-1,5-lactone + H2O2. The enzyme catalyses D-cellobiose + O2 = D-cellobiono-1,5-lactone + H2O2. It catalyses the reaction D-cellotriose + O2 = D-cellotriono-1,5-lactone + H2O2. The catalysed reaction is D-cellotetraose + O2 = D-cellotetraono-1,5-lactone + H2O2. It carries out the reaction D-cellopentaose + O2 = D-cellopentaono-1,5-lactone + H2O2. The enzyme catalyses D-cellohexaose + O2 = D-cellohexaono-1,5-lactone + H2O2. Functionally, catalyzes the selective oxidation of C1 hydroxyl moieties on mono- and disaccharides with concomitant reduction of molecular oxygen to hydrogen peroxide. This results in the formation of the corresponding lactones, which typically undergo spontaneous hydrolysis. Glucooligosaccharide oxidase is able to oxidize the monosaccharide D-glucose as well as the disaccharides maltose, cellobiose, and lactose. In addition, it shows high selectivity for cello- and maltooligosaccharides, indicating that glucooligosaccharide oxidase prefers oligosaccharides with a beta-D-glucosyl unit on the reducing end and additional sugar units linked by alpha- or beta-1,4 glucosidic bonds. In Sarocladium strictum (Black bundle disease fungus), this protein is Glucooligosaccharide oxidase (gluO).